Consider the following 531-residue polypeptide: Type 2 DNA topoisomerase 6 subunit B (531 aa).

Residues N42, D76, S97–K98, G106–K113, and K427 contribute to the ATP site.

The protein belongs to the TOP6B family. In terms of assembly, homodimer. Heterotetramer of two Top6A and two Top6B chains.

It carries out the reaction ATP-dependent breakage, passage and rejoining of double-stranded DNA.. Functionally, relaxes both positive and negative superturns and exhibits a strong decatenase activity. The sequence is that of Type 2 DNA topoisomerase 6 subunit B from Metallosphaera sedula (strain ATCC 51363 / DSM 5348 / JCM 9185 / NBRC 15509 / TH2).